A 411-amino-acid chain; its full sequence is Putative nickel insertion protein (411 aa).

It belongs to the LarC family.

The polypeptide is Putative nickel insertion protein (Methanothermobacter thermautotrophicus (strain ATCC 29096 / DSM 1053 / JCM 10044 / NBRC 100330 / Delta H) (Methanobacterium thermoautotrophicum)).